The following is a 1202-amino-acid chain: Voltage-gated inwardly rectifying potassium channel KCNH6 (1202 aa).

The Cytoplasmic portion of the chain corresponds to 1–405 (MGSAALPHAR…YSPFKAVWDW (405 aa)). In terms of domain architecture, PAS spans 36–84 (IIYCNDGFCEMFGYSRVEVMQRPCTCDFLTGPDTTKSSIAQLTQALLGS). One can recognise a PAC domain in the interval 87–139 (CKLEILYYRKDTSCFRCLVDVVPVKNEDGVVIMFILNFEDLAQLIAKSSGRSL). Disordered regions lie at residues 203 to 243 (ENCV…LGPR) and 285 to 315 (ERRA…SDSD). Over residues 213–222 (LLEKERRPSL) the composition is skewed to basic and acidic residues. Residues 406–426 (LILLLVIYTAVFTPYSAAFLL) traverse the membrane as a helical segment. The Extracellular portion of the chain corresponds to 427 to 443 (NEEQGEEKHWNCSYSCD). An N-linked (GlcNAc...) asparagine glycan is attached at Asn-437. The helical transmembrane segment at 444-464 (PLNIIDLIVDIMFIVDIVINF) threads the bilayer. The Cytoplasmic segment spans residues 465-485 (RTTYVNINDEVVSHPGKIAIH). A helical transmembrane segment spans residues 486-506 (YFKGWFLIDMVAAIPFDLLIF). Residues 507–515 (RSGSDETTT) are Extracellular-facing. Residues 516–536 (LIGLLKTARLLRLVRVARKLD) traverse the membrane as a helical; Voltage-sensor segment. Residues 537–543 (RYSEYGA) lie on the Cytoplasmic side of the membrane. The chain crosses the membrane as a helical span at residues 544–564 (AVLFLLMCTFALIAHWLACIW). Residues 565–608 (YAIGNVERPYMEHKIGWLDNLGDQIGKRYNDSDLSSGPSIKDKY) are Extracellular-facing. Asn-594 is a glycosylation site (N-linked (GlcNAc...) asparagine). The segment at residues 609 to 629 (VTALYFTFSSLTSVGFGNVSP) is an intramembrane region (pore-forming). The short motif at 621-626 (SVGFGN) is the Selectivity filter element. Residues 630 to 635 (NTNSEK) lie on the Extracellular side of the membrane. Residues 636–656 (IFSICVMLIGSLMYASIFGNV) form a helical membrane-spanning segment. Over 657–1202 (SAIIQRLYSG…HLSDPVLPGS (546 aa)) the chain is Cytoplasmic. Residues 739-839 (AFRGASKGCL…IQREDLLEVL (101 aa)) are cNMP-binding domain. Disordered regions lie at residues 912–948 (LTNP…GSPT), 1092–1112 (TPCA…PSYA), and 1140–1202 (TVYS…LPGS). A compositionally biased stretch (polar residues) spans 928-937 (GSSTTPCSQT). Positions 1179–1195 (EHLEASSEHQDIQRHLS) are enriched in basic and acidic residues.

This sequence belongs to the potassium channel family. H (Eag) (TC 1.A.1.20) subfamily. Kv11.2/KCNH6 sub-subfamily. In terms of assembly, the potassium channel is probably composed of a homo- or heterotetrameric complex of pore-forming alpha subunits that can associate only within their subfamily.

The protein localises to the cell membrane. It carries out the reaction K(+)(in) = K(+)(out). Pore-forming (alpha) subunit of voltage-gated inwardly rectifying potassium channel. Characterized by unusual gating kinetics by producing relatively small outward currents during membrane depolarization and large inward currents during subsequent repolarization which reflect a rapid inactivation during depolarization and quick recovery from inactivation but slow deactivation (closing) during repolarization. Activates even more slowly than KCNH2. The protein is Voltage-gated inwardly rectifying potassium channel KCNH6 of Gallus gallus (Chicken).